Consider the following 124-residue polypeptide: Putative membrane protein insertion efficiency factor (124 aa).

The protein belongs to the UPF0161 family.

The protein localises to the cell inner membrane. Could be involved in insertion of integral membrane proteins into the membrane. This chain is Putative membrane protein insertion efficiency factor, found in Psychrobacter cryohalolentis (strain ATCC BAA-1226 / DSM 17306 / VKM B-2378 / K5).